The chain runs to 1344 residues: Centrosomal P4.1-associated protein (1344 aa).

2 disordered regions span residues 67–123 (SSEE…NNDL) and 187–225 (PGTL…ASNV). A compositionally biased stretch (polar residues) spans 211–225 (SYSNPTQENSCASNV). S248 is modified (phosphoserine). A disordered region spans residues 257-300 (QEAHVKRNDLKEESPAHPSGEGALPRWEKKMGRSQEGKDVNLQK). Composition is skewed to basic and acidic residues over residues 259 to 271 (AHVK…EESP) and 282 to 297 (RWEK…KDVN). S304 carries the post-translational modification Phosphoserine. The interval 307-382 (VVNIDERPIK…FTNAKSKFQK (76 aa)) is alpha/beta-tubulin binding. Disordered stretches follow at residues 347-407 (QEAE…DRQH) and 425-470 (TVKK…KKRD). Residues 388–398 (LASTQSPSEDQ) show a composition bias toward polar residues. A Phosphoserine modification is found at S528. S577 and S583 each carry phosphoserine; by PLK2. Disordered stretches follow at residues 600-626 (RLSS…SNCS) and 672-735 (TSEI…DTGA). Basic and acidic residues predominate over residues 709–720 (VGDRVFSNREDS). S748 bears the Phosphoserine mark. An interaction with STIL region spans residues 887 to 1344 (QPPEFMVCFI…DGNVLMDTEM (458 aa)). The disordered stretch occupies residues 1105 to 1133 (QGNLSRRIKSAPPRDLGSSDKGQAALPRE).

The protein belongs to the TCP10 family. In terms of assembly, forms homodimers. Associates with microtubules plus ends; binds to beta-tubulin subunits exposed on microtubule outer surface at its distal tip; also associates with microtubule lattice. Associated with the gamma-tubulin complex. Interacts with the head domain of EPB41. Interacts with LYST. Interacts with CEP152 (via C-terminus). Interacts with STIL. Forms a complex with STIL and SASS6. Post-translationally, phosphorylation at Ser-577 and Ser-583 by PLK2 is required for procentriole formation and centriole elongation. Phosphorylation by PLK2 oscillates during the cell cycle: it increases at G1/S transition and decreases during the exit from mitosis. Phosphorylation at Ser-583 is also mediated by PLK4 but is not a critical step in PLK4 function in procentriole assembly.

It is found in the cytoplasm. Its subcellular location is the cytoskeleton. The protein localises to the microtubule organizing center. It localises to the centrosome. The protein resides in the centriole. Its function is as follows. Plays an important role in cell division and centrosome function by participating in centriole duplication. Inhibits microtubule nucleation from the centrosome. Involved in the regulation of slow processive growth of centriolar microtubules. Acts as microtubule plus-end tracking protein that stabilizes centriolar microtubules and inhibits microtubule polymerization and extension from the distal ends of centrioles. Required for centriole elongation and for STIL-mediated centriole amplification. Required for the recruitment of CEP295 to the proximal end of new-born centrioles at the centriolar microtubule wall during early S phase in a PLK4-dependent manner. May be involved in the control of centriolar-microtubule growth by acting as a regulator of tubulin release. This chain is Centrosomal P4.1-associated protein (Cpap), found in Mus musculus (Mouse).